A 349-amino-acid chain; its full sequence is UDP-N-acetylenolpyruvoylglucosamine reductase (349 aa).

Residues 26–197 (FDARARVAAR…VAVTFRLPKA (172 aa)) form the FAD-binding PCMH-type domain. Residue Arg173 is part of the active site. Ser249 (proton donor) is an active-site residue. Glu345 is a catalytic residue.

Belongs to the MurB family. The cofactor is FAD.

It localises to the cytoplasm. The enzyme catalyses UDP-N-acetyl-alpha-D-muramate + NADP(+) = UDP-N-acetyl-3-O-(1-carboxyvinyl)-alpha-D-glucosamine + NADPH + H(+). It functions in the pathway cell wall biogenesis; peptidoglycan biosynthesis. In terms of biological role, cell wall formation. The polypeptide is UDP-N-acetylenolpyruvoylglucosamine reductase (Burkholderia pseudomallei (strain K96243)).